The chain runs to 155 residues: Low molecular weight phosphotyrosine protein phosphatase 1 (155 aa).

The active-site Nucleophile is the C9. The active site involves R15. D124 serves as the catalytic Proton donor.

This sequence belongs to the low molecular weight phosphotyrosine protein phosphatase family. Cone cells and primary pigment cells in developing pupal retina.

It localises to the cytoplasm. It catalyses the reaction O-phospho-L-tyrosyl-[protein] + H2O = L-tyrosyl-[protein] + phosphate. The catalysed reaction is a phosphate monoester + H2O = an alcohol + phosphate. Functionally, acts on tyrosine phosphorylated proteins, low-MW aryl phosphates and natural and synthetic acyl phosphates. In Drosophila melanogaster (Fruit fly), this protein is Low molecular weight phosphotyrosine protein phosphatase 1 (primo-1).